The following is a 657-amino-acid chain: MGKDSKKHKKERRRERSPSTSDSDEERLQKRLAEQRSLKKDEKRRQKEEMKKNESAEEKRARRMEKKMRKDAKRKDADAEDTLIPPELNYTNLNNPFNDTKLTQTFVWGKKLEREGKSGLTQDEITKQTSQRIRKNLHEAAEFKRIRDSRAAAKEDMEMMKRDADLRAGQISDTKEREFQMDQIKERTRIRIDQGRAKAIDLLSRYARFADENPHTAKIPDFELENPMEYLKASCKSVDDYEDLIEDIKTYREVDGWAKNETWWMDVTRIAEDEIQKKAAQNRGDVHASVQTEVQNMFKNKSIDELLKLEDQMDAKIRGNSGNKGYWQDLDDQLKVFIARKRLREHHGRVLRLQLAIIKEEQKKEIQQQESEELLPVAEVPPQVKIQKEEEEEEEEDEDDEKISKKVRRKIDVQTLDDPELDEPERERKWRALTGDQLDDVTRELYRIGCYSPTYISADDTMPGIEILDEQADVDNLTERRNRNRGTLPSSSAASSGAPQGASSKMMAIAREGMEADESIFGAEEQLAAQRHLWSDKYRPRKPTYLNRVQTGFDWNKYNQTHYDQDNPPPKIVQGYKFNIFYPDLLDMTVAPRFGLTSCEDPDFAIIRFKAGPPYEDIAFKVVNREWETLHKNGYKCQFQNGVFQLWFMFKKYRYRR.

Residues 1-15 are compositionally biased toward basic residues; sequence MGKDSKKHKKERRRE. Disordered regions lie at residues 1–83, 369–406, and 472–503; these read MGKD…EDTL, QESE…ISKK, and ADVD…QGAS. Coiled coils occupy residues 23 to 77 and 352 to 403; these read SDEE…RKDA and RLQL…DEKI. A compositionally biased stretch (basic and acidic residues) spans 26 to 60; that stretch reads ERLQKRLAEQRSLKKDEKRRQKEEMKKNESAEEKR. A compositionally biased stretch (basic residues) spans 61–72; the sequence is ARRMEKKMRKDA. The segment covering 389 to 401 has biased composition (acidic residues); that stretch reads EEEEEEEEDEDDE. The span at 489–503 shows a compositional bias: low complexity; that stretch reads PSSSAASSGAPQGAS.

This sequence belongs to the CACTIN family. As to expression, expressed in pharynx, intestine, vulva and spermatheca (at protein level).

It is found in the nucleus. Its subcellular location is the cytoplasm. Plays a role in pre-mRNA splicing by facilitating excision of a subset of introns. Plays a role during early embryonic development. Required for the distal tip cell migration at the end of larval development and for gonad morphogenesis. The sequence is that of Splicing factor Cactin (cacn-1) from Caenorhabditis elegans.